Here is a 208-residue protein sequence, read N- to C-terminus: Small ribosomal subunit protein uS4 (208 aa).

The region spanning 98-163 is the S4 RNA-binding domain; the sequence is QRLDNVVYRM…NPQITRAIEL (66 aa).

This sequence belongs to the universal ribosomal protein uS4 family. Part of the 30S ribosomal subunit. Contacts protein S5. The interaction surface between S4 and S5 is involved in control of translational fidelity.

In terms of biological role, one of the primary rRNA binding proteins, it binds directly to 16S rRNA where it nucleates assembly of the body of the 30S subunit. Its function is as follows. With S5 and S12 plays an important role in translational accuracy. The sequence is that of Small ribosomal subunit protein uS4 from Campylobacter jejuni subsp. jejuni serotype O:6 (strain 81116 / NCTC 11828).